Here is a 259-residue protein sequence, read N- to C-terminus: Undecaprenyl-diphosphatase 3 (259 aa).

A run of 8 helical transmembrane segments spans residues 1-21 (MNWL…FLPI), 39-59 (AGLF…FIYY), 71-91 (FSKL…IGLL), 99-119 (ISKT…FLYM), 133-153 (ITYK…FPAI), 174-194 (AYFS…LQFV), 208-228 (SLIV…SWMI), and 239-259 (FAYY…TDVF).

This sequence belongs to the UppP family.

The protein resides in the cell membrane. It carries out the reaction di-trans,octa-cis-undecaprenyl diphosphate + H2O = di-trans,octa-cis-undecaprenyl phosphate + phosphate + H(+). Catalyzes the dephosphorylation of undecaprenyl diphosphate (UPP). Confers resistance to bacitracin. The protein is Undecaprenyl-diphosphatase 3 of Bacillus cereus (strain ATCC 14579 / DSM 31 / CCUG 7414 / JCM 2152 / NBRC 15305 / NCIMB 9373 / NCTC 2599 / NRRL B-3711).